The sequence spans 93 residues: Acylphosphatase (93 aa).

The Acylphosphatase-like domain occupies 6–93; that stretch reads RARIVVSGRV…GDLGAFEIRF (88 aa). Active-site residues include Arg21 and Asn39.

This sequence belongs to the acylphosphatase family.

It catalyses the reaction an acyl phosphate + H2O = a carboxylate + phosphate + H(+). This chain is Acylphosphatase (acyP), found in Anaeromyxobacter dehalogenans (strain 2CP-C).